The sequence spans 185 residues: MEAAADGPAETQSPVEKDSPAKTQSPAQDTSIMSRNNADTGRVLALPEHKKKRKGNLPAESVKILRDWMYKHRFKAYPSEEEKQMLSEKTNLSLLRISNWFINARRRILPDMLQQRRNDPIIGHKTGKDAHATHLQSTEASVPAKSGPVVQTMYKACPCGPCQRARCQERSNQIRSRPLARSSPE.

2 disordered regions span residues 1–58 and 166–185; these read MEAA…GNLP and RCQERSNQIRSRPLARSSPE. Residues 21–39 show a composition bias toward polar residues; sequence AKTQSPAQDTSIMSRNNAD. The homeobox; TALE-type DNA-binding region spans 48 to 111; the sequence is EHKKKRKGNL…INARRRILPD (64 aa).

This sequence belongs to the TALE/TGIF homeobox family. Specifically expressed in adult testis.

Its subcellular location is the nucleus. Functionally, may have a transcription role in testis. May act as a competitor/regulator of TGIF2LX. The protein is Homeobox protein TGIF2LY (TGIF2LY) of Homo sapiens (Human).